The primary structure comprises 322 residues: ATP-dependent 6-phosphofructokinase (322 aa).

An ATP-binding site is contributed by G11. 21 to 25 (RAVVR) is an ADP binding site. ATP contacts are provided by residues 72 to 73 (RC) and 102 to 105 (GDGS). D103 serves as a coordination point for Mg(2+). Substrate is bound at residue 127–129 (TID). D129 acts as the Proton acceptor in catalysis. Residue R156 coordinates ADP. Residues R164 and 171 to 173 (MGR) contribute to the substrate site. ADP-binding positions include 187-189 (GAE), R213, and 215-217 (KKH). Substrate contacts are provided by residues E224, R245, and 251–254 (HVQR).

The protein belongs to the phosphofructokinase type A (PFKA) family. ATP-dependent PFK group I subfamily. Prokaryotic clade 'B1' sub-subfamily. Homotetramer. It depends on Mg(2+) as a cofactor.

It localises to the cytoplasm. It carries out the reaction beta-D-fructose 6-phosphate + ATP = beta-D-fructose 1,6-bisphosphate + ADP + H(+). It participates in carbohydrate degradation; glycolysis; D-glyceraldehyde 3-phosphate and glycerone phosphate from D-glucose: step 3/4. Its activity is regulated as follows. Allosterically activated by ADP and other diphosphonucleosides, and allosterically inhibited by phosphoenolpyruvate. Functionally, catalyzes the phosphorylation of D-fructose 6-phosphate to fructose 1,6-bisphosphate by ATP, the first committing step of glycolysis. This is ATP-dependent 6-phosphofructokinase from Staphylococcus aureus (strain JH1).